The chain runs to 1035 residues: Valine--tRNA ligase (1035 aa).

Positions 45 to 55 (PNVTGALHLGH) match the 'HIGH' region motif. A coiled-coil region spans residues 253-281 (EKLSDANEKEAVDLNKQIEALQKRREERL). Lys619 contacts ATP. Residues 967-1035 (DVEAELARLE…QDILKLQSKK (69 aa)) adopt a coiled-coil conformation.

It belongs to the class-I aminoacyl-tRNA synthetase family. ValS type 1 subfamily. As to quaternary structure, monomer.

The protein resides in the cytoplasm. It catalyses the reaction tRNA(Val) + L-valine + ATP = L-valyl-tRNA(Val) + AMP + diphosphate. Functionally, catalyzes the attachment of valine to tRNA(Val). As ValRS can inadvertently accommodate and process structurally similar amino acids such as threonine, to avoid such errors, it has a 'posttransfer' editing activity that hydrolyzes mischarged Thr-tRNA(Val) in a tRNA-dependent manner. The chain is Valine--tRNA ligase from Rhodopirellula baltica (strain DSM 10527 / NCIMB 13988 / SH1).